Here is a 544-residue protein sequence, read N- to C-terminus: CTP synthase (544 aa).

Residues 1–266 (MTKFIFVTGG…DDLICERFGL (266 aa)) form an amidoligase domain region. Ser-13 provides a ligand contact to CTP. Residue Ser-13 participates in UTP binding. ATP contacts are provided by residues 14-19 (SLGKGI) and Asp-71. Residues Asp-71 and Glu-140 each coordinate Mg(2+). Residues 147-149 (DIE), 187-192 (KTKPTQ), and Lys-223 each bind CTP. UTP is bound by residues 187–192 (KTKPTQ) and Lys-223. The region spanning 291–543 (TVAMVGKYVE…VKAAKNYSEA (253 aa)) is the Glutamine amidotransferase type-1 domain. Gly-354 is a binding site for L-glutamine. Cys-381 serves as the catalytic Nucleophile; for glutamine hydrolysis. L-glutamine contacts are provided by residues 382–385 (LGMQ), Glu-404, and Arg-471. Active-site residues include His-516 and Glu-518.

It belongs to the CTP synthase family. Homotetramer.

The enzyme catalyses UTP + L-glutamine + ATP + H2O = CTP + L-glutamate + ADP + phosphate + 2 H(+). The catalysed reaction is L-glutamine + H2O = L-glutamate + NH4(+). It catalyses the reaction UTP + NH4(+) + ATP = CTP + ADP + phosphate + 2 H(+). The protein operates within pyrimidine metabolism; CTP biosynthesis via de novo pathway; CTP from UDP: step 2/2. Allosterically activated by GTP, when glutamine is the substrate; GTP has no effect on the reaction when ammonia is the substrate. The allosteric effector GTP functions by stabilizing the protein conformation that binds the tetrahedral intermediate(s) formed during glutamine hydrolysis. Inhibited by the product CTP, via allosteric rather than competitive inhibition. Catalyzes the ATP-dependent amination of UTP to CTP with either L-glutamine or ammonia as the source of nitrogen. Regulates intracellular CTP levels through interactions with the four ribonucleotide triphosphates. The polypeptide is CTP synthase (Psychrobacter arcticus (strain DSM 17307 / VKM B-2377 / 273-4)).